The following is a 422-amino-acid chain: Probable Na(+)/H(+) antiporter 2 (422 aa).

Transmembrane regions (helical) follow at residues Ile-3–Ile-23, Gly-28–Ile-48, Ile-52–Gly-72, Ile-93–Leu-113, Ile-119–Phe-139, Val-157–Ala-177, Ile-183–Phe-203, Tyr-216–Phe-236, Tyr-242–Val-262, Leu-281–Leu-301, Leu-307–Ile-327, Ile-341–Tyr-361, and Leu-384–Ala-404.

Belongs to the monovalent cation:proton antiporter 1 (CPA1) transporter (TC 2.A.36) family.

Its subcellular location is the cell membrane. In terms of biological role, this is probably a Na(+)/H(+) antiporter. The chain is Probable Na(+)/H(+) antiporter 2 from Methanocaldococcus jannaschii (strain ATCC 43067 / DSM 2661 / JAL-1 / JCM 10045 / NBRC 100440) (Methanococcus jannaschii).